We begin with the raw amino-acid sequence, 481 residues long: Alpha-L-arabinofuranosidase 43 (481 aa).

A signal peptide spans 1 to 19 (MRFSVFTAAIAAAFSACCA). Residues Asn158, Asn176, and Asn365 are each glycosylated (N-linked (GlcNAc...) asparagine).

It belongs to the glycosyl hydrolase 43 family.

It localises to the secreted. It carries out the reaction Hydrolysis of terminal non-reducing alpha-L-arabinofuranoside residues in alpha-L-arabinosides.. With respect to regulation, activity is significantly inhibited by SDS and partially inhibited by Ag(+), Fe(3+) and beta-mercaptoethanol. Functionally, alpha-L-arabinofuranosidase specific for the cleavage of alpha-1,3-linkage. Shows high activity against 4-nitrophenyl alpha-L-arabinofuranoside, debranched arabinan, and sugar beet arabinan. The chain is Alpha-L-arabinofuranosidase 43 from Humicola insolens (Soft-rot fungus).